The chain runs to 274 residues: Thiazole synthase (274 aa).

The active-site Schiff-base intermediate with DXP is Lys115. 1-deoxy-D-xylulose 5-phosphate contacts are provided by residues Gly176, 202–203 (AG), and 224–225 (NS).

The protein belongs to the ThiG family. Homotetramer. Forms heterodimers with either ThiH or ThiS.

Its subcellular location is the cytoplasm. The enzyme catalyses [ThiS sulfur-carrier protein]-C-terminal-Gly-aminoethanethioate + 2-iminoacetate + 1-deoxy-D-xylulose 5-phosphate = [ThiS sulfur-carrier protein]-C-terminal Gly-Gly + 2-[(2R,5Z)-2-carboxy-4-methylthiazol-5(2H)-ylidene]ethyl phosphate + 2 H2O + H(+). It functions in the pathway cofactor biosynthesis; thiamine diphosphate biosynthesis. Functionally, catalyzes the rearrangement of 1-deoxy-D-xylulose 5-phosphate (DXP) to produce the thiazole phosphate moiety of thiamine. Sulfur is provided by the thiocarboxylate moiety of the carrier protein ThiS. In vitro, sulfur can be provided by H(2)S. This chain is Thiazole synthase, found in Parasynechococcus marenigrum (strain WH8102).